A 316-amino-acid chain; its full sequence is Taste receptor type 2 member 109 (316 aa).

The Extracellular segment spans residues 1-14; that stretch reads MEHLLKRTFDITEN. The chain crosses the membrane as a helical span at residues 15-35; it reads ILLIILFIELIIGLIGNGFTA. Residues 36–62 lie on the Cytoplasmic side of the membrane; that stretch reads LVHCMDWVKRKKMSLVNKILTALATSR. A helical membrane pass occupies residues 63–83; it reads IFLLWFMLVGFPISSLYPYLV. Residues 84 to 94 are Extracellular-facing; it reads TTRLMIQFTST. Residues 95 to 115 form a helical membrane-spanning segment; sequence LWTIANHISVWFATCLSVFYF. Over 116 to 135 the chain is Cytoplasmic; the sequence is LKIANFSNSPFLYLKRRVEK. A helical membrane pass occupies residues 136 to 156; it reads VVSVTLLVSLVLLFLNILLLN. Residues 157–191 are Extracellular-facing; it reads LEINMCINEYHQINISYIFISYYHLSCQIQVLGSH. Asparagine 170 carries N-linked (GlcNAc...) asparagine glycosylation. The helical transmembrane segment at 192–212 threads the bilayer; that stretch reads IIFLSVPVVLSLSTFLLLIFS. Residues 213–241 are Cytoplasmic-facing; that stretch reads LWTLHKRMQQHVQGGRDARTTAHFKALQA. The chain crosses the membrane as a helical span at residues 242-262; the sequence is VIAFLLLYSIFILSLLLQFWI. Topologically, residues 263–270 are extracellular; that stretch reads HGLRKKPP. Residues 271–291 traverse the membrane as a helical segment; that stretch reads FIAFCQVVDTAFPSFHSYVLI. At 292 to 316 the chain is on the cytoplasmic side; it reads LRDRKLRHASLSVLSWLKCRPNYVK.

It belongs to the G-protein coupled receptor T2R family.

The protein localises to the membrane. Functionally, putative taste receptor which may play a role in the perception of bitterness. The protein is Taste receptor type 2 member 109 of Mus musculus (Mouse).